Reading from the N-terminus, the 650-residue chain is 1-deoxy-D-xylulose-5-phosphate synthase (650 aa).

Residues H73 and 114-116 contribute to the thiamine diphosphate site; that span reads SHA. A Mg(2+)-binding site is contributed by D145. Thiamine diphosphate contacts are provided by residues 146 to 147, N174, Y285, and E367; that span reads GA. N174 contacts Mg(2+). A disordered region spans residues 631–650; the sequence is MGDEVGADESNQTPAGGGQA.

This sequence belongs to the transketolase family. DXPS subfamily. In terms of assembly, homodimer. The cofactor is Mg(2+). Thiamine diphosphate serves as cofactor.

It catalyses the reaction D-glyceraldehyde 3-phosphate + pyruvate + H(+) = 1-deoxy-D-xylulose 5-phosphate + CO2. Its pathway is metabolic intermediate biosynthesis; 1-deoxy-D-xylulose 5-phosphate biosynthesis; 1-deoxy-D-xylulose 5-phosphate from D-glyceraldehyde 3-phosphate and pyruvate: step 1/1. Functionally, catalyzes the acyloin condensation reaction between C atoms 2 and 3 of pyruvate and glyceraldehyde 3-phosphate to yield 1-deoxy-D-xylulose-5-phosphate (DXP). This Parafrankia sp. (strain EAN1pec) protein is 1-deoxy-D-xylulose-5-phosphate synthase.